The chain runs to 362 residues: Acyl-CoA-binding domain-containing protein 3 (362 aa).

Positions methionine 1–alanine 22 are cleaved as a signal peptide. 2 disordered regions span residues glutamine 132 to asparagine 151 and valine 193 to glutamate 214. Residues arginine 192–aspartate 221 are a coiled coil. Positions leucine 231 to lysine 318 constitute an ACB domain. An acyl-CoA-binding positions include phenylalanine 260 to lysine 264, lysine 286, and tyrosine 305. The tract at residues methionine 329–proline 362 is disordered.

The protein belongs to the ACBP family. As to expression, expressed in roots, stems, leaves, flowers and siliques.

The protein resides in the secreted. It is found in the extracellular space. Its function is as follows. Binds medium- and long-chain acyl-CoA esters with very high affinity. Can interact in vitro with arachidonyl-CoA, barely with oleoyl-CoA, but not with palmitoyl-CoA. This Arabidopsis thaliana (Mouse-ear cress) protein is Acyl-CoA-binding domain-containing protein 3 (ACBP3).